Here is a 389-residue protein sequence, read N- to C-terminus: Lipid-A-disaccharide synthase (389 aa).

This sequence belongs to the LpxB family.

It carries out the reaction a lipid X + a UDP-2-N,3-O-bis[(3R)-3-hydroxyacyl]-alpha-D-glucosamine = a lipid A disaccharide + UDP + H(+). The protein operates within bacterial outer membrane biogenesis; LPS lipid A biosynthesis. Its function is as follows. Condensation of UDP-2,3-diacylglucosamine and 2,3-diacylglucosamine-1-phosphate to form lipid A disaccharide, a precursor of lipid A, a phosphorylated glycolipid that anchors the lipopolysaccharide to the outer membrane of the cell. This Paraburkholderia phymatum (strain DSM 17167 / CIP 108236 / LMG 21445 / STM815) (Burkholderia phymatum) protein is Lipid-A-disaccharide synthase.